Here is a 783-residue protein sequence, read N- to C-terminus: Na(+)/H(+) exchanger protein 7 (783 aa).

The chain crosses the membrane as a helical span at residues 1-18; sequence MWIKLLFFFTTLLVSTSG. Topologically, residues 19-108 are extracellular; the sequence is LGDDGITALL…WHWDYVKNEL (90 aa). A helical transmembrane segment spans residues 109 to 129; that stretch reads VLTLFFIVIGLFKLVYHHTFV. At 130–132 the chain is on the cytoplasmic side; sequence TRK. Residues 133–153 traverse the membrane as a helical segment; the sequence is ILPESCCLIFIGIAIGFFFVG. Topologically, residues 154–159 are extracellular; the sequence is DATHAS. A helical membrane pass occupies residues 160–180; the sequence is IKFLEFKSKVFFFYLLPPIIL. Residues 181–206 are Cytoplasmic-facing; it reads ESAYSLKDRAFIENIGTILLYAVVGT. Residues 207 to 227 traverse the membrane as a helical segment; the sequence is ILNIVLLAAALLILIWVGIMG. The Extracellular segment spans residues 228-235; sequence KYNLSVMD. A helical transmembrane segment spans residues 236–256; that stretch reads ILTFASLVAAVDPVAVLAVFQ. Topologically, residues 257–262 are cytoplasmic; it reads EVGVNK. Residues 263 to 283 form a helical membrane-spanning segment; that stretch reads MLYFMVFGESLFNDAVTIVCY. Topologically, residues 284–299 are extracellular; the sequence is NLAIEFQTLPDFTWYH. Residues 300-320 form a helical membrane-spanning segment; sequence GFLGLLSFLCVSIGGLIIGLI. Residues 321-350 lie on the Cytoplasmic side of the membrane; the sequence is CGAISSFVTKFTTDVRVVEPVVLFGMAYLA. The chain crosses the membrane as a helical span at residues 351–371; the sequence is YLGSEMFHFSGIIALIACGLF. The Extracellular portion of the chain corresponds to 372 to 390; that stretch reads QTHYACCNISYKSFTSVMY. Asparagine 379 is a glycosylation site (N-linked (GlcNAc...) asparagine). The segment at residues 391–411 is an intramembrane region (helical); that stretch reads ITKVCSTLCESLIFIILGVML. The Extracellular segment spans residues 412-424; the sequence is VNEREWFWTDWHP. Residues 425–445 form a helical membrane-spanning segment; that stretch reads VFSAVSVVLCVVVRFGVTFFL. Residues 446-464 are Cytoplasmic-facing; sequence TYFVNQFTGGVRHISFQEQ. A helical transmembrane segment spans residues 465-485; the sequence is FIMSYGGLRGAVSFSLVFMIS. Residues 486–492 lie on the Extracellular side of the membrane; it reads ANPDVKN. The helical transmembrane segment at 493-513 threads the bilayer; it reads TMLGATYAVILFTNIIQGSTI. The Cytoplasmic segment spans residues 514 to 783; the sequence is KLFVKWLNIR…TITESEETSF (270 aa). Residues 649–702 adopt a coiled-coil conformation; sequence DNEDADQRANELIKDVSSIRQLMHNPFEDCYLDRNLTHEEEKEQARLKMKKTRA. Residues 745–783 are disordered; it reads RPSTSTRVSVEDEEQGLTMKEMEEEHPLMTITESEETSF.

It belongs to the monovalent cation:proton antiporter 1 (CPA1) transporter (TC 2.A.36) family. In terms of assembly, interacts (via C-terminus) with cmd-1. As to expression, detected in the posterior cells of the intestine.

The protein resides in the basolateral cell membrane. Functionally, na+/H+ exchanger which mediates the transient acidification of the coelomic space and plays a role in contraction of posterior body muscles during defecation. Probably by regulating the defecation motor program, required for fatty acid uptake by intestinal cells. The sequence is that of Na(+)/H(+) exchanger protein 7 from Caenorhabditis elegans.